We begin with the raw amino-acid sequence, 510 residues long: Probable RNA-binding protein 46 (510 aa).

The disordered stretch occupies residues 23–42 (ENGQRKFGGPPPGWEGPPPP). Residues 31–42 (GPPPGWEGPPPP) show a composition bias toward pro residues. 3 consecutive RRM domains span residues 45 to 123 (REVF…VSLD), 125 to 207 (CRLF…WAEP), and 220 to 292 (RVLY…LAKP).

Expressed in the testis and ovary.

The protein resides in the cytoplasm. Its function is as follows. Essential for male and female fertility, playing a crucial role in regulating germ cell development by ensuring the proper progression of meiosis prophase I. The polypeptide is Probable RNA-binding protein 46 (rbm46) (Danio rerio (Zebrafish)).